The chain runs to 940 residues: Gamma-aminobutyric acid type B receptor subunit 2 (940 aa).

Residues 1-40 form the signal peptide; that stretch reads MASPPSSGQPRPPPPPPPPARLLLPLLLSLLLWLAPGAWG. Over 41–482 the chain is Extracellular; it reads WTRGAPRPPP…LRKISLPLYS (442 aa). N-linked (GlcNAc...) asparagine glycosylation occurs at Asn89. Disulfide bonds link Cys107–Cys134, Cys236–Cys265, and Cys264–Cys301. Asn297, Asn388, Asn403, and Asn452 each carry an N-linked (GlcNAc...) asparagine glycan. The helical transmembrane segment at 483 to 503 threads the bilayer; sequence ILSALTILGMIMASAFLFFNI. Residues 504–521 lie on the Cytoplasmic side of the membrane; the sequence is KNRNQKLIKMSSPYMNNL. A helical membrane pass occupies residues 522–542; the sequence is IILGGMLSYASIFLFGLDGSF. The Extracellular portion of the chain corresponds to 543–550; it reads VSEKTFET. A helical transmembrane segment spans residues 551–571; that stretch reads LCTVRTWILTVGYTTAFGAMF. Over 572 to 596 the chain is Cytoplasmic; the sequence is AKTWRVHAIFKNVKMKKKIIKDQKL. Residues 597–617 form a helical membrane-spanning segment; that stretch reads LVIVGGMLLIDLCILICWQAV. Over 618–653 the chain is Extracellular; that stretch reads DPLRRTVERYSMEPDPAGRDISIRPLLEHCENTHMT. The chain crosses the membrane as a helical span at residues 654–674; the sequence is IWLGIVYAYKGLLMLFGCFLA. Topologically, residues 675 to 690 are cytoplasmic; it reads WETRNVSIPALNDSKY. A helical membrane pass occupies residues 691-711; the sequence is IGMSVYNVGIMCIIGAAVSFL. Topologically, residues 712–719 are extracellular; it reads TRDQPNVQ. A helical membrane pass occupies residues 720-740; sequence FCIVALVIIFCSTITLCLVFV. Residues 741–940 lie on the Cytoplasmic side of the membrane; sequence PKLITLRTNP…PSFRVMVSGL (200 aa). The interval 762–789 is disordered; sequence TQNQKKEDSKTSTSVTSVNQASTSRLEG. Polar residues predominate over residues 772-786; sequence TSTSVTSVNQASTSR. Residues Ser775 and Ser778 each carry the phosphoserine modification. The stretch at 780–818 forms a coiled coil; sequence NQASTSRLEGLQSENHRLRMKITELDKDLEEVTMQLQDT. Thr818 carries the post-translational modification Phosphothreonine. Phosphoserine is present on residues Ser883, Ser892, Ser912, Ser915, Ser919, and Ser923.

The protein belongs to the G-protein coupled receptor 3 family. GABA-B receptor subfamily. In terms of assembly, heterodimer of GABBR1 and GABBR2. Homodimers may form, but are inactive. Interacts (via C-terminus) with ATF4 (via leucine zipper domain). Interacts with KCTD8, KCTD12 and KCTD16; this interaction determines the pharmacology and kinetics of the receptor response, the KCTD proteins markedly accelerating the GABA-B response, although to different extents. Highly expressed in areas of the brain including thalamic nuclei, the hippocampus, cerebellar Purkinje cells and the medial habenula, and moderately expressed in the cerebral cortex, certain anterioventral thalamic nuclei, dorsal medial hypothalamic nucleus and suprachiasmatic nuclei. Also weakly expressed in the testis.

It is found in the cell membrane. The protein resides in the postsynaptic cell membrane. It localises to the perikaryon. The protein localises to the cell projection. Its subcellular location is the dendrite. Its function is as follows. Component of a heterodimeric G-protein coupled receptor for GABA, formed by GABBR1 and GABBR2. Within the heterodimeric GABA receptor, only GABBR1 seems to bind agonists, while GABBR2 mediates coupling to G proteins. Ligand binding causes a conformation change that triggers signaling via guanine nucleotide-binding proteins (G proteins) and modulates the activity of down-stream effectors, such as adenylate cyclase. Signaling inhibits adenylate cyclase, stimulates phospholipase A2, activates potassium channels, inactivates voltage-dependent calcium-channels and modulates inositol phospholipid hydrolysis. Plays a critical role in the fine-tuning of inhibitory synaptic transmission. Pre-synaptic GABA receptor inhibits neurotransmitter release by down-regulating high-voltage activated calcium channels, whereas postsynaptic GABA receptor decreases neuronal excitability by activating a prominent inwardly rectifying potassium (Kir) conductance that underlies the late inhibitory postsynaptic potentials. Not only implicated in synaptic inhibition but also in hippocampal long-term potentiation, slow wave sleep, muscle relaxation and antinociception. The chain is Gamma-aminobutyric acid type B receptor subunit 2 (Gabbr2) from Rattus norvegicus (Rat).